The following is a 432-amino-acid chain: D-amino acid dehydrogenase (432 aa).

Residue 3–17 (VVILGSGVVGVTSAW) coordinates FAD.

It belongs to the DadA oxidoreductase family. FAD is required as a cofactor.

The catalysed reaction is a D-alpha-amino acid + A + H2O = a 2-oxocarboxylate + AH2 + NH4(+). The protein operates within amino-acid degradation; D-alanine degradation; NH(3) and pyruvate from D-alanine: step 1/1. Functionally, oxidative deamination of D-amino acids. The polypeptide is D-amino acid dehydrogenase (Salmonella arizonae (strain ATCC BAA-731 / CDC346-86 / RSK2980)).